The following is a 594-amino-acid chain: Invasin CotH2 (594 aa).

A signal peptide spans 1–19 (MKLSLTIVSSSFLVAIAHA). Residues Asn77, Asn162, Asn226, Asn316, Asn441, Asn519, and Asn533 are each glycosylated (N-linked (GlcNAc...) asparagine). The tract at residues 529-565 (PPAANGTATSTNDGGNTHTAAGESKPASSSESSGSKI) is disordered. A compositionally biased stretch (polar residues) spans 534–547 (GTATSTNDGGNTHT). The span at 548–565 (AAGESKPASSSESSGSKI) shows a compositional bias: low complexity. Residue Ser571 is the site of GPI-anchor amidated serine attachment. Residues 572–594 (GASRSAVSTVLLGVTALVATAIF) constitute a propeptide, removed in mature form.

Interacts with host epithelial cell surface HSPA5/BiP protein.

It is found in the cell membrane. Functionally, promotes invasion of host epithelial cells by adhering to receptors on the host cell surface to facilitate endocytosis of the pathogen into host cells. Binds HSPA5/BiP protein on the cell surface of host epithelial cells. In Rhizopus delemar (strain RA 99-880 / ATCC MYA-4621 / FGSC 9543 / NRRL 43880) (Mucormycosis agent), this protein is Invasin CotH2.